A 305-amino-acid polypeptide reads, in one-letter code: D-alanine--D-alanine ligase (305 aa).

In terms of domain architecture, ATP-grasp spans 99 to 300; sequence KLFFEKAGIR…YEEMIQTFVN (202 aa). 126-181 is an ATP binding site; the sequence is NFTGTYPVVVKPNQEGSTIGLTVAETEEELLQGIEEAFRHDDTILIEEFIAGTEVT.

The protein belongs to the D-alanine--D-alanine ligase family.

Its subcellular location is the cytoplasm. The catalysed reaction is 2 D-alanine + ATP = D-alanyl-D-alanine + ADP + phosphate + H(+). The protein operates within cell wall biogenesis; peptidoglycan biosynthesis. Cell wall formation. This chain is D-alanine--D-alanine ligase, found in Halalkalibacterium halodurans (strain ATCC BAA-125 / DSM 18197 / FERM 7344 / JCM 9153 / C-125) (Bacillus halodurans).